Reading from the N-terminus, the 327-residue chain is MAWWKAWVEQEGVTVKGSPHFNPVPDAETLYKAMKGIGTNEQAIIDVLTRRSSAQRQQIAKSFKAQFGSDLTETLKSELSGKFERLIVALMYPPYRYEAKELHDAMKGLGTKEGVIIEILASRTKNQLQEIMKAYEEDYGSSLEEDIQADTSGYLERILVCLLQGSRDDVTGFVDPGLALQDAQDLYAAGEKICGTDEMKFITILCTRSARHLMRVFEEYEKIANKSIEDSIKSETHGSLEEAMLTIVKCTRNLHCYFAERLHYAMKGAGTLDGTLIRNIVSRSEIDLNLIKGHYKKMYGKTLSSMIMEDTSGDYKNALLSLVGSDP.

Annexin repeat units follow at residues 21-92 (FNPV…ALMY), 93-164 (PPYR…CLLQ), 177-249 (GLAL…TIVK), and 253-324 (NLHC…SLVG). Residues M266, G268, G270, and D310 each coordinate Ca(2+).

The protein belongs to the annexin family.

Functionally, this protein is an anticoagulant protein that acts as an indirect inhibitor of the thromboplastin-specific complex, which is involved in the blood coagulation cascade. The protein is Annexin A8 (ANXA8) of Oryctolagus cuniculus (Rabbit).